Consider the following 273-residue polypeptide: Dermonecrotic toxin LspaSicTox-alphaIA1ii (273 aa).

H5 is a catalytic residue. The Mg(2+) site is built by E25 and D27. Residue H41 is the Nucleophile of the active site. Disulfide bonds link C45–C51 and C47–C190. A Mg(2+)-binding site is contributed by D85.

This sequence belongs to the arthropod phospholipase D family. Class II subfamily. Mg(2+) serves as cofactor. As to expression, expressed by the venom gland.

It is found in the secreted. The catalysed reaction is an N-(acyl)-sphingosylphosphocholine = an N-(acyl)-sphingosyl-1,3-cyclic phosphate + choline. It catalyses the reaction an N-(acyl)-sphingosylphosphoethanolamine = an N-(acyl)-sphingosyl-1,3-cyclic phosphate + ethanolamine. It carries out the reaction a 1-acyl-sn-glycero-3-phosphocholine = a 1-acyl-sn-glycero-2,3-cyclic phosphate + choline. The enzyme catalyses a 1-acyl-sn-glycero-3-phosphoethanolamine = a 1-acyl-sn-glycero-2,3-cyclic phosphate + ethanolamine. Its function is as follows. Dermonecrotic toxins cleave the phosphodiester linkage between the phosphate and headgroup of certain phospholipids (sphingolipid and lysolipid substrates), forming an alcohol (often choline) and a cyclic phosphate. This toxin acts on sphingomyelin (SM). It may also act on ceramide phosphoethanolamine (CPE), lysophosphatidylcholine (LPC) and lysophosphatidylethanolamine (LPE), but not on lysophosphatidylserine (LPS), and lysophosphatidylglycerol (LPG). It acts by transphosphatidylation, releasing exclusively cyclic phosphate products as second products. Induces dermonecrosis, hemolysis, increased vascular permeability, edema, inflammatory response, and platelet aggregation. The sequence is that of Dermonecrotic toxin LspaSicTox-alphaIA1ii from Loxosceles spadicea (Recluse spider).